Reading from the N-terminus, the 589-residue chain is ATP-dependent lipid A-core flippase (589 aa).

5 helical membrane-spanning segments follow: residues 23-43 (WPIFLIGVVGMIAVSLSDAGF), 60-80 (LVFIRWLPFIIVLVFLFRGAA), 153-173 (VGLLVVMFLVSWKLTLFFLVI), 249-269 (VGTSLVQLLIAIPIAIVLFFA), and 272-292 (PSFHVTAGSFASIVSAMIMML). The ABC transmembrane type-1 domain maps to 27–307 (LIGVVGMIAV…LTMVNSYIQK (281 aa)). An ABC transporter domain is found at 339-575 (IEYQGVSFAY…NGAYAELYRM (237 aa)). 373–380 (GRSGAGKS) is an ATP binding site.

Belongs to the ABC transporter superfamily. Lipid exporter (TC 3.A.1.106) family. Homodimer.

The protein resides in the cell inner membrane. The catalysed reaction is ATP + H2O + lipid A-core oligosaccharideSide 1 = ADP + phosphate + lipid A-core oligosaccharideSide 2.. In terms of biological role, involved in lipopolysaccharide (LPS) biosynthesis. Translocates lipid A-core from the inner to the outer leaflet of the inner membrane. Transmembrane domains (TMD) form a pore in the inner membrane and the ATP-binding domain (NBD) is responsible for energy generation. The polypeptide is ATP-dependent lipid A-core flippase (Coxiella burnetii (strain RSA 493 / Nine Mile phase I)).